The primary structure comprises 319 residues: ADP-L-glycero-D-manno-heptose-6-epimerase (319 aa).

NADP(+) is bound by residues 10 to 11, 31 to 32, Lys38, Lys53, and 79 to 83; these read FI, DD, and EGACS. The Proton acceptor role is filled by Tyr144. Lys148 contributes to the NADP(+) binding site. Asn173 contacts substrate. The NADP(+) site is built by Val174 and Lys182. The active-site Proton acceptor is Lys182. Substrate contacts are provided by residues Ser184, His191, 205 to 208, Arg218, and Tyr282; that span reads FEGC.

Belongs to the NAD(P)-dependent epimerase/dehydratase family. HldD subfamily. In terms of assembly, homopentamer. It depends on NADP(+) as a cofactor.

It carries out the reaction ADP-D-glycero-beta-D-manno-heptose = ADP-L-glycero-beta-D-manno-heptose. Its pathway is nucleotide-sugar biosynthesis; ADP-L-glycero-beta-D-manno-heptose biosynthesis; ADP-L-glycero-beta-D-manno-heptose from D-glycero-beta-D-manno-heptose 7-phosphate: step 4/4. Functionally, catalyzes the interconversion between ADP-D-glycero-beta-D-manno-heptose and ADP-L-glycero-beta-D-manno-heptose via an epimerization at carbon 6 of the heptose. This is ADP-L-glycero-D-manno-heptose-6-epimerase from Aeromonas salmonicida (strain A449).